A 242-amino-acid chain; its full sequence is Urease accessory protein UreF (242 aa).

The protein belongs to the UreF family. As to quaternary structure, ureD, UreF and UreG form a complex that acts as a GTP-hydrolysis-dependent molecular chaperone, activating the urease apoprotein by helping to assemble the nickel containing metallocenter of UreC. The UreE protein probably delivers the nickel.

It is found in the cytoplasm. In terms of biological role, required for maturation of urease via the functional incorporation of the urease nickel metallocenter. The sequence is that of Urease accessory protein UreF from Bradyrhizobium diazoefficiens (strain JCM 10833 / BCRC 13528 / IAM 13628 / NBRC 14792 / USDA 110).